The sequence spans 284 residues: MLTSLITSSTTVTLTLSQIYYILDIACGFLISVLVWMNSSVLDNGNHSNPQIRDMSSNMIKADCVVIEDSFRGFPTEYFCTSPRYDECLDYVLIPNGMIKDRLEKMSMDIVDYYEACNATSITLMCVLKGGFKFLADLVDGLERTVRARGIVLPMSVEFVRVKSYVNDVSIHEPILTGLGDPSEYKDKNVLVVEDIIDTGKTITKLISHLDSLSTKSVKVASLLVKRTSPRNDYRPDVGFEVPNRFVVGYALDYNDNFRDLHHICVINEVGQKKFSVPCTSKPV.

Residues Lys-129, 194-202, Lys-226, and Asp-253 contribute to the GMP site; that span reads EDIIDTGKT. The active-site Proton acceptor is the Asp-198. Asp-253 lines the Mg(2+) pocket.

Belongs to the purine/pyrimidine phosphoribosyltransferase family. As to quaternary structure, homotetramer. It depends on Mg(2+) as a cofactor.

It is found in the cytoplasm. It catalyses the reaction IMP + diphosphate = hypoxanthine + 5-phospho-alpha-D-ribose 1-diphosphate. It carries out the reaction GMP + diphosphate = guanine + 5-phospho-alpha-D-ribose 1-diphosphate. Its pathway is purine metabolism; IMP biosynthesis via salvage pathway; IMP from hypoxanthine: step 1/1. Its function is as follows. Converts guanine to guanosine monophosphate, and hypoxanthine to inosine monophosphate. Transfers the 5-phosphoribosyl group from 5-phosphoribosylpyrophosphate onto the purine. Plays a central role in the generation of purine nucleotides through the purine salvage pathway. The polypeptide is Hypoxanthine-guanine phosphoribosyltransferase (HGPRT) (Schistosoma mansoni (Blood fluke)).